Here is a 228-residue protein sequence, read N- to C-terminus: Probable septum site-determining protein MinC (228 aa).

This sequence belongs to the MinC family. In terms of assembly, interacts with MinD and FtsZ.

Its function is as follows. Cell division inhibitor that blocks the formation of polar Z ring septums. Rapidly oscillates between the poles of the cell to destabilize FtsZ filaments that have formed before they mature into polar Z rings. Prevents FtsZ polymerization. The protein is Probable septum site-determining protein MinC of Bacillus cytotoxicus (strain DSM 22905 / CIP 110041 / 391-98 / NVH 391-98).